The primary structure comprises 172 residues: MSQRPNPSALIWLLLSALVVGLDQWSKAWVLSSLPEYTPVPVIDGFWNWYRTYNTGAAFSFLSDAGGWQLWFFTALAVGISGLLAFWLSRTARGQWRSALPYALVIGGAIGNVIDRLMHGHVVDFIQWYIGSHTWPSFNIADSAIVGGAIGIAVFGLFDKSDKQQPGTGNLR.

3 consecutive transmembrane segments (helical) span residues 10 to 30 (LIWL…KAWV), 68 to 88 (WQLW…AFWL), and 98 to 118 (SALP…DRLM). Residues aspartate 124 and aspartate 142 contribute to the active site. Residues 138 to 158 (FNIADSAIVGGAIGIAVFGLF) traverse the membrane as a helical segment.

The protein belongs to the peptidase A8 family.

The protein resides in the cell inner membrane. It catalyses the reaction Release of signal peptides from bacterial membrane prolipoproteins. Hydrolyzes -Xaa-Yaa-Zaa-|-(S,diacylglyceryl)Cys-, in which Xaa is hydrophobic (preferably Leu), and Yaa (Ala or Ser) and Zaa (Gly or Ala) have small, neutral side chains.. Its pathway is protein modification; lipoprotein biosynthesis (signal peptide cleavage). This protein specifically catalyzes the removal of signal peptides from prolipoproteins. The sequence is that of Lipoprotein signal peptidase from Xanthomonas axonopodis pv. citri (strain 306).